The chain runs to 213 residues: Protein brother (213 aa).

A disordered region spans residues 189–213 (HTPQTPPEDHHHRGGPGLPRGPMGW). Residues 203–213 (GPGLPRGPMGW) show a composition bias toward gly residues.

The protein belongs to the CBF-beta family.

It localises to the nucleus. Its function is as follows. Regulates the DNA-binding properties of Runt. In Drosophila melanogaster (Fruit fly), this protein is Protein brother (Bro).